We begin with the raw amino-acid sequence, 2367 residues long: Toxin B (2367 aa).

The tract at residues 2-91 (SLVNRKQLEK…EILELKNSNL (90 aa)) is four-helical bundle. Positions 96–469 (KNLHFIWIGG…YPEANTTITL (374 aa)) constitute a GT44 domain. Positions 96 to 469 (KNLHFIWIGG…YPEANTTITL (374 aa)) are glucosyltransferase region. Residues 101 to 103 (IWI), Asn-139, 269 to 273 (SDILR), and 286 to 288 (DVD) each bind UDP-alpha-D-glucose. Residues Asp-286, Asp-288, and Glu-516 each contribute to the Mg(2+) site. 519–521 (SLW) lines the UDP-alpha-D-glucose pocket. The autoprocessing region stretch occupies residues 545–800 (GEDDNLDFSQ…KSKNLPELST (256 aa)). Zn(2+)-binding residues include Glu-546 and Asp-547. The region spanning 568-775 (SSSTKSSERG…EESIIKDISS (208 aa)) is the Peptidase C80 domain. 1D-myo-inositol hexakisphosphate is bound by residues Tyr-578, Lys-601, and Lys-648. His-654 lines the Zn(2+) pocket. His-654 acts as the For protease activity in catalysis. Catalysis depends on Cys-699, which acts as the Nucleophile; for protease activity. His-758 lines the Zn(2+) pocket. The 1D-myo-inositol hexakisphosphate site is built by Lys-765, Lys-776, and Lys-793. The translocation region stretch occupies residues 801 to 1501 (LLQEIRNNSN…VVLIIKVYMD (701 aa)). 3 interaction with host frizzled receptors FZD1, FZD2 and FZD7 regions span residues 1434-1439 (LKTLMA), 1487-1512 (SELSDVVLIIKVYMDNSKPPFGYYSN), and 1598-1600 (SLK). Cell wall-binding repeat units lie at residues 1833 to 1852 (VSGLVYINDSLYYFKPPIKN), 1854 to 1873 (ITGFTTIGDDKYYFNPDNGG), 1876 to 1895 (SVGETIIDGKNYYFSQNGVL), 1926 to 1945 (FTGKLIIDENVYYFGDNYRA), 1946 to 1965 (AIEWQTLDDEVYYFSTDTGR), 1967 to 1986 (FKGLNQIGDDKFYFNSDGIM), 1987 to 2006 (QKGFVNINDKTFYFDDSGVM), 2007 to 2026 (KSGYTEIDGRYFYFAENGEM), 2057 to 2076 (YSGILNFNNKIYYFDDSFTA), 2077 to 2097 (VVGWKDLEDGSKYYFDENTAE), 2099 to 2118 (SIGISIINDGKYYFNDSGIM), 2119 to 2138 (QIGFVTINNEVFYFSDSGIV), 2139 to 2158 (ESGMQNIDDNYFYISENGLV), 2209 to 2231 (ETGWIYDSENESDKYYFDPEAKK), 2233 to 2252 (YKGINVIDDIKYYFDENGIM), 2253 to 2272 (RTGLITFEDNHYYFNEDGEM), 2273 to 2292 (QYGYLNIEDKMFYFSEDGIM), 2323 to 2342 (YTGWLDLDEKRYYFTDEYIA), and 2343 to 2362 (ATGSVIIDGEEYYFDPDTAQ). The interval 1835–2367 (GLVYINDSLY…PDTAQLVISE (533 aa)) is receptor-binding (CROPS) region.

Belongs to the clostridial glucosylating toxin (LCGT) family. Interacts with host FZD1. Interacts with host FZD2; interaction promotes toxin entry into host cell and occupies the binding site for Wnt-adducted palmitoleate in FZD2, leading to prevent Wnt-binding and downstream Wnt signaling. Interacts with host FZD7. Interacts with host CSPG4. Interacts with host NECTIN3/PVRL3. Zn(2+) serves as cofactor. The cofactor is Mn(2+). Requires Mg(2+) as cofactor. Post-translationally, undergoes autocatalytic cleavage to release the N-terminal part (Glucosyltransferase TcdB), which constitutes the active part of the toxin, in the host cytosol. 1D-myo-inositol hexakisphosphate-binding (InsP6) activates the peptidase C80 domain and promotes autoprocessing.

It localises to the secreted. Its subcellular location is the host endosome membrane. It is found in the host cytoplasm. The protein resides in the host cytosol. The protein localises to the host cell membrane. It catalyses the reaction L-threonyl-[protein] + UDP-alpha-D-glucose = 3-O-(alpha-D-glucosyl)-L-threonyl-[protein] + UDP + H(+). With respect to regulation, protease activity is activated upon binding to 1D-myo-inositol hexakisphosphate (InsP6), which induces conformational reorganization. Functionally, precursor of a cytotoxin that targets and disrupts the colonic epithelium, inducing the host inflammatory and innate immune responses and resulting in diarrhea and pseudomembranous colitis. TcdB constitutes the main toxin that mediates the pathology of C.difficile infection, an opportunistic pathogen that colonizes the colon when the normal gut microbiome is disrupted. Compared to TcdA, TcdB is more virulent and more important for inducing the host inflammatory and innate immune responses. This form constitutes the precursor of the toxin: it enters into host cells and mediates autoprocessing to release the active toxin (Glucosyltransferase TcdB) into the host cytosol. Targets colonic epithelia by binding to the frizzled receptors FZD1, FZD2 and FZD7, and enters host cells via clathrin-mediated endocytosis. Frizzled receptors constitute the major host receptors in the colonic epithelium, but other receptors, such as CSPG4 or NECTIN3/PVRL3, have been identified. Binding to carbohydrates and sulfated glycosaminoglycans on host cell surface also contribute to entry into cells. Once entered into host cells, acidification in the endosome promotes the membrane insertion of the translocation region and formation of a pore, leading to translocation of the GT44 and peptidase C80 domains across the endosomal membrane. This activates the peptidase C80 domain and autocatalytic processing, releasing the N-terminal part (Glucosyltransferase TcdB), which constitutes the active part of the toxin, in the cytosol. Active form of the toxin, which is released into the host cytosol following autoprocessing and inactivates small GTPases. Acts by mediating monoglucosylation of small GTPases of the Rho family (Rac1, RhoA, RhoB, RhoC, RhoG and Cdc42) in host cells at the conserved threonine residue located in the switch I region ('Thr-37/35'), using UDP-alpha-D-glucose as the sugar donor. Monoglucosylation of host small GTPases completely prevents the recognition of the downstream effector, blocking the GTPases in their inactive form, leading to actin cytoskeleton disruption and cell death, resulting in the loss of colonic epithelial barrier function. This is Toxin B from Clostridioides difficile (Peptoclostridium difficile).